Reading from the N-terminus, the 117-residue chain is Large ribosomal subunit protein eL8 (117 aa).

It belongs to the eukaryotic ribosomal protein eL8 family. As to quaternary structure, part of the 50S ribosomal subunit. Part of the RNase P complex.

Its subcellular location is the cytoplasm. It carries out the reaction Endonucleolytic cleavage of RNA, removing 5'-extranucleotides from tRNA precursor.. Its function is as follows. Multifunctional RNA-binding protein that recognizes the K-turn motif in ribosomal RNA, the RNA component of RNase P, box H/ACA, box C/D and box C'/D' sRNAs. Part of ribonuclease P, a protein complex that generates mature tRNA molecules by cleaving their 5'-ends, this subunit dramatically stimulates RNase P activity. This Methanococcus maripaludis (strain DSM 14266 / JCM 13030 / NBRC 101832 / S2 / LL) protein is Large ribosomal subunit protein eL8.